The chain runs to 296 residues: Bifunctional protein FolD (296 aa).

Residues 166 to 168 (GRS), Ser191, and Ile232 each bind NADP(+).

This sequence belongs to the tetrahydrofolate dehydrogenase/cyclohydrolase family. In terms of assembly, homodimer.

It catalyses the reaction (6R)-5,10-methylene-5,6,7,8-tetrahydrofolate + NADP(+) = (6R)-5,10-methenyltetrahydrofolate + NADPH. It carries out the reaction (6R)-5,10-methenyltetrahydrofolate + H2O = (6R)-10-formyltetrahydrofolate + H(+). The protein operates within one-carbon metabolism; tetrahydrofolate interconversion. Catalyzes the oxidation of 5,10-methylenetetrahydrofolate to 5,10-methenyltetrahydrofolate and then the hydrolysis of 5,10-methenyltetrahydrofolate to 10-formyltetrahydrofolate. The sequence is that of Bifunctional protein FolD from Cereibacter sphaeroides (strain ATCC 17029 / ATH 2.4.9) (Rhodobacter sphaeroides).